A 78-amino-acid polypeptide reads, in one-letter code: Sec-independent protein translocase protein TatA (78 aa).

The helical transmembrane segment at 1 to 21 (MGGISIWQLLIVALIVVLLFG) threads the bilayer. The disordered stretch occupies residues 40–78 (KSAMSSEEEKKAIEDSASEKTAQTEEKKTESKDKDKEQV). Basic and acidic residues predominate over residues 46–78 (EEEKKAIEDSASEKTAQTEEKKTESKDKDKEQV).

Belongs to the TatA/E family. As to quaternary structure, the Tat system comprises two distinct complexes: a TatABC complex, containing multiple copies of TatA, TatB and TatC subunits, and a separate TatA complex, containing only TatA subunits. Substrates initially bind to the TatABC complex, which probably triggers association of the separate TatA complex to form the active translocon.

It localises to the cell inner membrane. Functionally, part of the twin-arginine translocation (Tat) system that transports large folded proteins containing a characteristic twin-arginine motif in their signal peptide across membranes. TatA could form the protein-conducting channel of the Tat system. This Shewanella sediminis (strain HAW-EB3) protein is Sec-independent protein translocase protein TatA.